A 310-amino-acid chain; its full sequence is Olfactory receptor 5T7 (310 aa).

The Extracellular segment spans residues 1–23; sequence MENITEVTEFILMGFTDNADLEI. An N-linked (GlcNAc...) asparagine glycan is attached at asparagine 3. The chain crosses the membrane as a helical span at residues 24 to 44; sequence LSFFLFLAIYLFTLMGNLGLI. At 45 to 52 the chain is on the cytoplasmic side; that stretch reads TLVIGDSR. Residues 53-73 form a helical membrane-spanning segment; the sequence is LHNPMYYFLSVLSSVDACYST. The Extracellular portion of the chain corresponds to 74 to 97; it reads VITPQMVVDFVSEKKVISFIGCAT. A disulfide bridge links cysteine 95 with cysteine 187. A helical membrane pass occupies residues 98–118; it reads QMFLAVTFGTTECFLLAAMAY. Residues 119 to 131 are Cytoplasmic-facing; that stretch reads DRYVAIHNPLMYV. The chain crosses the membrane as a helical span at residues 132-152; that stretch reads VSMSPRVYVPLIIASYAGGIL. Residues 153 to 194 lie on the Extracellular side of the membrane; it reads HAVIHTVATFRLSFCGSNKISHIFCDIPPLLAISCSDTHFNQ. Residues 195–215 form a helical membrane-spanning segment; the sequence is LLLFYCAGFIEVVTILIVLLS. Topologically, residues 216–235 are cytoplasmic; that stretch reads YGFILSVILKTRSTEGKRKV. The helical transmembrane segment at 236–256 threads the bilayer; sequence FSTCGSHLMAVSTFHGTVLFM. At 257–269 the chain is on the extracellular side; it reads YVRPSDSYALEHD. A helical transmembrane segment spans residues 270-290; sequence MMVSIFYSIVIPMLNPLIYSL. Over 291-310 the chain is Cytoplasmic; the sequence is RNKDVKEAIKKVFGKRILCG.

This sequence belongs to the G-protein coupled receptor 1 family.

It is found in the cell membrane. Functionally, potential odorant receptor. In Mus musculus (Mouse), this protein is Olfactory receptor 5T7.